The following is a 539-amino-acid chain: Chaperonin GroEL (539 aa).

Residues 29 to 32 (TLGP), 86 to 90 (DGTTT), Gly413, 477 to 479 (NAA), and Asp493 each bind ATP.

The protein belongs to the chaperonin (HSP60) family. Forms a cylinder of 14 subunits composed of two heptameric rings stacked back-to-back. Interacts with the co-chaperonin GroES.

The protein resides in the cytoplasm. It carries out the reaction ATP + H2O + a folded polypeptide = ADP + phosphate + an unfolded polypeptide.. Functionally, together with its co-chaperonin GroES, plays an essential role in assisting protein folding. The GroEL-GroES system forms a nano-cage that allows encapsulation of the non-native substrate proteins and provides a physical environment optimized to promote and accelerate protein folding. The chain is Chaperonin GroEL from Leifsonia xyli subsp. xyli (strain CTCB07).